We begin with the raw amino-acid sequence, 205 residues long: MRERGLLIVFSGPSGVGKGTVRAKIFESENNFEYSVSMTTRKQRPGEVDGKDYYFRTRDEFEEMIRNGQMLEYAEYVGNYYGTPLTYVNQTLDEGKDVFLEIEVQGALQVKEKVPDGVFVFLTPPDLEELRGRLVGRGTDSAEVIASRLEKAKEEIRLMSEYDYAVVNDKVELAAERVKKIIEAEHYRVDRVIERYVHMIDDVKV.

One can recognise a Guanylate kinase-like domain in the interval 5–183 (GLLIVFSGPS…AAERVKKIIE (179 aa)). An ATP-binding site is contributed by 12–19 (GPSGVGKG).

This sequence belongs to the guanylate kinase family.

It is found in the cytoplasm. It carries out the reaction GMP + ATP = GDP + ADP. In terms of biological role, essential for recycling GMP and indirectly, cGMP. The chain is Guanylate kinase (gmk) from Lactococcus lactis subsp. lactis (strain IL1403) (Streptococcus lactis).